We begin with the raw amino-acid sequence, 330 residues long: MASINLIKSLKLYKEKIWSFDFSQGILATGSTDRKIKLVSVKDDDFTLIDVLDETAHKKAIRSVAWRPHTSLLAAGSFDSTVSIWAKEESADRTFEMDLLAIIEGHENEVKGVAWSNDGYYLATCSRDKSVWIWETDESGEEYECISVLQEHSQDVKHVIWHPSEALLASSSYDDTVRIWKDYDDDWECVAVLNGHEGTVWSSDFDKTEGVFRLCSGSDDSTVRVWKYMGDDEDDQQEWVCEAILPDVHKRQVYNVAWGFNGLIASVGADGVLAVYEEVDGEWKVFAKRALCHGVYEINVVKWLELNGKTILATGGDDGIVNFWSLEKAA.

WD repeat units lie at residues 12 to 49 (LYKE…FTLI), 56 to 95 (AHKK…DRTF), 105 to 144 (GHEN…EEYE), 151 to 190 (EHSQ…WECV), 195 to 236 (GHEG…EDDQ), 248 to 286 (VHKR…WKVF), and 292 to 330 (CHGV…EKAA).

Belongs to the WD repeat CIA1 family. Interacts with NAR1.

It is found in the cytoplasm. The protein localises to the nucleus. Functionally, essential component of the cytosolic iron-sulfur (Fe/S) protein assembly machinery. Required for the maturation of extramitochondrial Fe/S proteins. In Saccharomyces cerevisiae (strain YJM789) (Baker's yeast), this protein is Probable cytosolic iron-sulfur protein assembly protein 1.